The primary structure comprises 141 residues: VLSGTDKSNIKAAWDKVGAHAGEYGAEALERTFTSFPTTKTYFPHFDLSHGSAQVKAHGKKVADALTNAVGHLDDLPGAMSALSDLHAHKLRVDPVNFKLLSHCLLVTLACHHPNDFTPAVHASLDKFLATVSTVLTSKYR.

One can recognise a Globin domain in the interval 1–141 (VLSGTDKSNI…VSTVLTSKYR (141 aa)). A Phosphoserine modification is found at Ser-3. 2 positions are modified to N6-succinyllysine: Lys-7 and Lys-11. The residue at position 16 (Lys-16) is an N6-acetyllysine; alternate. An N6-succinyllysine; alternate modification is found at Lys-16. Tyr-24 is subject to Phosphotyrosine. The residue at position 35 (Ser-35) is a Phosphoserine. Lys-40 is modified (N6-succinyllysine). A Phosphoserine modification is found at Ser-49. His-58 is a binding site for O2. Residue His-87 coordinates heme b. Phosphoserine is present on Ser-102. Thr-108 bears the Phosphothreonine mark. At Ser-124 the chain carries Phosphoserine. Phosphothreonine occurs at positions 134 and 137. Ser-138 carries the post-translational modification Phosphoserine.

The protein belongs to the globin family. In terms of assembly, heterotetramer of two alpha chains and two beta chains. As to expression, red blood cells.

Involved in oxygen transport from the lung to the various peripheral tissues. In terms of biological role, hemopressin acts as an antagonist peptide of the cannabinoid receptor CNR1. Hemopressin-binding efficiently blocks cannabinoid receptor CNR1 and subsequent signaling. This is Hemoglobin subunit alpha (HBA) from Talpa europaea (European mole).